A 220-amino-acid polypeptide reads, in one-letter code: UPF0319 protein YccT (220 aa).

An N-terminal signal peptide occupies residues 1-20; that stretch reads MKTGIVTTLIALCLPVSVFA.

This sequence belongs to the UPF0319 family.

This Shigella flexneri serotype 5b (strain 8401) protein is UPF0319 protein YccT.